The following is a 204-amino-acid chain: Small ribosomal subunit protein uS4 (204 aa).

Positions 95–157 (RRLDNTVFRM…KGIHSIIRHN (63 aa)) constitute an S4 RNA-binding domain.

Belongs to the universal ribosomal protein uS4 family. Part of the 30S ribosomal subunit. Contacts protein S5. The interaction surface between S4 and S5 is involved in control of translational fidelity.

Its function is as follows. One of the primary rRNA binding proteins, it binds directly to 16S rRNA where it nucleates assembly of the body of the 30S subunit. With S5 and S12 plays an important role in translational accuracy. The polypeptide is Small ribosomal subunit protein uS4 (Treponema pallidum (strain Nichols)).